A 279-amino-acid chain; its full sequence is Biotin synthase (279 aa).

The Radical SAM core domain occupies 2 to 228; that stretch reads KTIMLCAISS…NARIMIAGGR (227 aa). The [4Fe-4S] cluster site is built by C17, C21, and C24. Residues C61, C96, C154, and R221 each contribute to the [2Fe-2S] cluster site.

The protein belongs to the radical SAM superfamily. Biotin synthase family. As to quaternary structure, homodimer. It depends on [4Fe-4S] cluster as a cofactor. The cofactor is [2Fe-2S] cluster.

It carries out the reaction (4R,5S)-dethiobiotin + (sulfur carrier)-SH + 2 reduced [2Fe-2S]-[ferredoxin] + 2 S-adenosyl-L-methionine = (sulfur carrier)-H + biotin + 2 5'-deoxyadenosine + 2 L-methionine + 2 oxidized [2Fe-2S]-[ferredoxin]. Its pathway is cofactor biosynthesis; biotin biosynthesis; biotin from 7,8-diaminononanoate: step 2/2. Its function is as follows. Catalyzes the conversion of dethiobiotin (DTB) to biotin by the insertion of a sulfur atom into dethiobiotin via a radical-based mechanism. The protein is Biotin synthase of Campylobacter curvus (strain 525.92).